The primary structure comprises 240 residues: Glutathione S-transferase U9 (240 aa).

A GST N-terminal domain is found at 7-86; sequence NKVILHGSFA…YIDETWSNGP (80 aa). Glutathione contacts are provided by residues 17-18, 43-44, 57-58, and 70-71; these read SP, NK, KI, and ES. The region spanning 92–226 is the GST C-terminal domain; the sequence is DPYRRSKVRF…EQILEILRAF (135 aa). Thr161 is modified (phosphothreonine).

This sequence belongs to the GST superfamily. Tau family.

Its subcellular location is the cytoplasm. It localises to the cytosol. The catalysed reaction is RX + glutathione = an S-substituted glutathione + a halide anion + H(+). In terms of biological role, may be involved in the conjugation of reduced glutathione to a wide number of exogenous and endogenous hydrophobic electrophiles and have a detoxification role against certain herbicides. This chain is Glutathione S-transferase U9 (GSTU9), found in Arabidopsis thaliana (Mouse-ear cress).